The chain runs to 271 residues: NAD kinase (271 aa).

Catalysis depends on aspartate 52, which acts as the Proton acceptor. Residues 52–53 (DG), 129–130 (NE), arginine 155, aspartate 157, and alanine 192 contribute to the NAD(+) site.

It belongs to the NAD kinase family. Requires a divalent metal cation as cofactor.

The protein resides in the cytoplasm. The catalysed reaction is NAD(+) + ATP = ADP + NADP(+) + H(+). In terms of biological role, involved in the regulation of the intracellular balance of NAD and NADP, and is a key enzyme in the biosynthesis of NADP. Catalyzes specifically the phosphorylation on 2'-hydroxyl of the adenosine moiety of NAD to yield NADP. The sequence is that of NAD kinase from Geobacillus stearothermophilus (Bacillus stearothermophilus).